The chain runs to 467 residues: Uronate isomerase (467 aa).

The protein belongs to the metallo-dependent hydrolases superfamily. Uronate isomerase family.

The catalysed reaction is D-glucuronate = D-fructuronate. The enzyme catalyses aldehydo-D-galacturonate = keto-D-tagaturonate. It functions in the pathway carbohydrate metabolism; pentose and glucuronate interconversion. This is Uronate isomerase from Histophilus somni (strain 2336) (Haemophilus somnus).